The following is a 362-amino-acid chain: Uracil-DNA glycosylase (362 aa).

The interval 28–97 (ASVAPNDPTE…AGPTEDPNFA (70 aa)) is disordered. The active-site Proton acceptor is the D205.

The protein belongs to the uracil-DNA glycosylase (UDG) superfamily. UNG family.

It is found in the host nucleus. It carries out the reaction Hydrolyzes single-stranded DNA or mismatched double-stranded DNA and polynucleotides, releasing free uracil.. Its function is as follows. Excises uracil residues from the DNA which can arise as a result of misincorporation of dUMP residues by DNA polymerase or deamination of cytosines. Therefore may reduce deleterious uracil incorporation into the viral genome, particularly in terminally differentiated cells which lack DNA repair enzymes. The sequence is that of Uracil-DNA glycosylase (UL2) from Psittacid herpesvirus 1 (isolate Amazon parrot/-/97-0001/1997) (PsHV-1).